The following is a 429-amino-acid chain: C4-dicarboxylate transport protein (429 aa).

8 consecutive transmembrane segments (helical) span residues V9 to P29, L45 to M65, L79 to I99, G149 to G169, V185 to M205, L223 to A243, I308 to M328, and A356 to I376.

The protein belongs to the dicarboxylate/amino acid:cation symporter (DAACS) (TC 2.A.23) family.

Its subcellular location is the cell inner membrane. Functionally, responsible for the transport of dicarboxylates such as succinate, fumarate, and malate from the periplasm across the membrane. In Burkholderia ambifaria (strain ATCC BAA-244 / DSM 16087 / CCUG 44356 / LMG 19182 / AMMD) (Burkholderia cepacia (strain AMMD)), this protein is C4-dicarboxylate transport protein.